The sequence spans 310 residues: N-acetyl-gamma-glutamyl-phosphate reductase (310 aa).

The active site involves C117.

The protein belongs to the NAGSA dehydrogenase family. Type 2 subfamily.

The protein resides in the cytoplasm. The catalysed reaction is N-acetyl-L-glutamate 5-semialdehyde + phosphate + NADP(+) = N-acetyl-L-glutamyl 5-phosphate + NADPH + H(+). Its pathway is amino-acid biosynthesis; L-arginine biosynthesis; N(2)-acetyl-L-ornithine from L-glutamate: step 3/4. In terms of biological role, catalyzes the NADPH-dependent reduction of N-acetyl-5-glutamyl phosphate to yield N-acetyl-L-glutamate 5-semialdehyde. In Rhizobium leguminosarum bv. trifolii (strain WSM2304), this protein is N-acetyl-gamma-glutamyl-phosphate reductase.